The following is a 692-amino-acid chain: ABC1 family protein C21C3.03, mitochondrial (692 aa).

Residues Met-1–Glu-91 constitute a mitochondrion transit peptide. 2 helical membrane-spanning segments follow: residues Trp-96 to Leu-116 and Leu-161 to Leu-181.

Belongs to the protein kinase superfamily. ADCK protein kinase family.

The protein localises to the mitochondrion membrane. This Schizosaccharomyces pombe (strain 972 / ATCC 24843) (Fission yeast) protein is ABC1 family protein C21C3.03, mitochondrial.